The sequence spans 190 residues: Xanthine phosphoribosyltransferase (190 aa).

Residues Leu20 and Asn27 each contribute to the xanthine site. Position 128-132 (128-132) interacts with 5-phospho-alpha-D-ribose 1-diphosphate; it reads ANGEA. A xanthine-binding site is contributed by Lys156.

This sequence belongs to the purine/pyrimidine phosphoribosyltransferase family. Xpt subfamily. As to quaternary structure, homodimer.

It is found in the cytoplasm. The catalysed reaction is XMP + diphosphate = xanthine + 5-phospho-alpha-D-ribose 1-diphosphate. Its pathway is purine metabolism; XMP biosynthesis via salvage pathway; XMP from xanthine: step 1/1. Converts the preformed base xanthine, a product of nucleic acid breakdown, to xanthosine 5'-monophosphate (XMP), so it can be reused for RNA or DNA synthesis. The polypeptide is Xanthine phosphoribosyltransferase (Clostridium botulinum (strain Eklund 17B / Type B)).